Consider the following 118-residue polypeptide: Basic phospholipase A2 PA-12C (118 aa).

7 cysteine pairs are disulfide-bonded: C11/C71, C27/C117, C29/C45, C44/C98, C51/C91, C60/C84, and C78/C89. Positions 28, 30, and 32 each coordinate Ca(2+). Residue H48 is part of the active site. A Ca(2+)-binding site is contributed by D49. D92 is a catalytic residue.

This sequence belongs to the phospholipase A2 family. Group I subfamily. D49 sub-subfamily. Requires Ca(2+) as cofactor. In terms of tissue distribution, expressed by the venom gland.

It localises to the secreted. It catalyses the reaction a 1,2-diacyl-sn-glycero-3-phosphocholine + H2O = a 1-acyl-sn-glycero-3-phosphocholine + a fatty acid + H(+). Its function is as follows. PLA2 catalyzes the calcium-dependent hydrolysis of the 2-acyl groups in 3-sn-phosphoglycerides. The protein is Basic phospholipase A2 PA-12C of Pseudechis australis (Mulga snake).